Here is a 421-residue protein sequence, read N- to C-terminus: 4-methylaminobutanoate oxidase (methylamine-forming) (421 aa).

Residues Glu-31, Arg-33, Arg-39, and Glu-379 each contribute to the FAD site.

This sequence belongs to the flavin monoamine oxidase family. Monomer. The cofactor is FAD.

The catalysed reaction is 4-(methylamino)butanoate + O2 + H2O = succinate semialdehyde + methylamine + H2O2. It participates in alkaloid degradation; nicotine degradation. Its function is as follows. Catalyzes the removal of methylamine from 4-methylaminobutanoate with the formation of succinate semialdehyde. Is involved in the catabolism of 4-methylaminobutanoate produced from nicotine. Has a very weak monoamine oxidase activity with 4-aminobutanoate. Cannot use spermidine, spermine, sarcosine, dimethylglycine, glycine, choline, betaine, alpha-methylamino isobutyrate, methylamine propionitrile and methylamino propylamine as substrate. The polypeptide is 4-methylaminobutanoate oxidase (methylamine-forming) (mao) (Paenarthrobacter nicotinovorans (Arthrobacter nicotinovorans)).